We begin with the raw amino-acid sequence, 67 residues long: uncharacterized protein (67 aa).

This is an uncharacterized protein from Saccharolobus islandicus (Sulfolobus islandicus).